A 420-amino-acid polypeptide reads, in one-letter code: Serine hydroxymethyltransferase (420 aa).

Residues Leu-121 and 125-127 (GHL) contribute to the (6S)-5,6,7,8-tetrahydrofolate site. Lys-230 is modified (N6-(pyridoxal phosphate)lysine). 355–357 (SPF) contacts (6S)-5,6,7,8-tetrahydrofolate.

The protein belongs to the SHMT family. In terms of assembly, homodimer. It depends on pyridoxal 5'-phosphate as a cofactor.

It localises to the cytoplasm. It catalyses the reaction (6R)-5,10-methylene-5,6,7,8-tetrahydrofolate + glycine + H2O = (6S)-5,6,7,8-tetrahydrofolate + L-serine. The protein operates within one-carbon metabolism; tetrahydrofolate interconversion. Its pathway is amino-acid biosynthesis; glycine biosynthesis; glycine from L-serine: step 1/1. In terms of biological role, catalyzes the reversible interconversion of serine and glycine with tetrahydrofolate (THF) serving as the one-carbon carrier. This reaction serves as the major source of one-carbon groups required for the biosynthesis of purines, thymidylate, methionine, and other important biomolecules. Also exhibits THF-independent aldolase activity toward beta-hydroxyamino acids, producing glycine and aldehydes, via a retro-aldol mechanism. The sequence is that of Serine hydroxymethyltransferase from Streptococcus mutans serotype c (strain ATCC 700610 / UA159).